A 247-amino-acid chain; its full sequence is E3 ubiquitin ligase TRIM40 (247 aa).

The segment at Cys-12–Arg-55 adopts an RING-type zinc-finger fold. Residues Gly-64 to Ile-105 form a B box-type zinc finger. Residues Cys-69, His-72, Cys-91, and His-97 each contribute to the Zn(2+) site. The stretch at His-111–Trp-148 forms a coiled coil.

The protein belongs to the TRIM/RBCC family. As to quaternary structure, interacts with NEDD8.

The enzyme catalyses S-ubiquitinyl-[E2 ubiquitin-conjugating enzyme]-L-cysteine + [acceptor protein]-L-lysine = [E2 ubiquitin-conjugating enzyme]-L-cysteine + N(6)-ubiquitinyl-[acceptor protein]-L-lysine.. Functionally, E3 ubiquitin-protein ligase that plays a role in the limitation of the innate immune response. Mediates inhibition of the RLR signaling pathway by ubiquitinating RIGI and IFIH1 receptors, leading to their proteasomal degradation. Also promotes the neddylation of IKBKG/NEMO, stabilizing NFKBIA, and thereby inhibiting of NF-kappa-B nuclear translocation and activation. The polypeptide is E3 ubiquitin ligase TRIM40 (Trim40) (Rattus norvegicus (Rat)).